Reading from the N-terminus, the 133-residue chain is ATP synthase epsilon chain (133 aa).

It belongs to the ATPase epsilon chain family. F-type ATPases have 2 components, CF(1) - the catalytic core - and CF(0) - the membrane proton channel. CF(1) has five subunits: alpha(3), beta(3), gamma(1), delta(1), epsilon(1). CF(0) has three main subunits: a, b and c.

The protein resides in the cell membrane. Its function is as follows. Produces ATP from ADP in the presence of a proton gradient across the membrane. The protein is ATP synthase epsilon chain of Clostridium perfringens (strain SM101 / Type A).